Reading from the N-terminus, the 583-residue chain is uncharacterized protein (583 aa).

An FAD-binding FR-type domain is found at 162 to 424; it reads YGIFAAPILD…RGVQQNPFAK (263 aa).

The protein belongs to the flavoprotein pyridine nucleotide cytochrome reductase family. FAD serves as cofactor.

It is found in the mitochondrion. This is an uncharacterized protein from Schizosaccharomyces pombe (strain 972 / ATCC 24843) (Fission yeast).